A 389-amino-acid chain; its full sequence is Large envelope protein (389 aa).

N-acetylmethionine is present on Met-1. Gly-2 is lipidated: N-myristoyl glycine; by host. The segment at 2–108 is pre-S1; that stretch reads GTNLSVPNPL…PPLRDTHPQA (107 aa). Residues 2–163 are pre-S; that stretch reads GTNLSVPNPL…LSTTGDPVPN (162 aa). The Virion surface; in external conformation segment spans residues 2–170; it reads GTNLSVPNPL…VPNMENIASG (169 aa). Topologically, residues 2 to 242 are intravirion; in internal conformation; sequence GTNLSVPNPL…PGYRWMCLRR (241 aa). Residues 109 to 163 are pre-S2; that stretch reads MQWNSTTFHQTLQDPRVRALYFPAGGSSSGTVNPVQNTASSISSILSTTGDPVPN. The helical transmembrane segment at 171–191 threads the bilayer; sequence LLGPLLVLQAGFFSLTKILTI. At 192–242 the chain is on the intravirion; in external conformation side; it reads PLSLDSWWTSLNFLGETPVCLGQNSQSQISSHSPTCCPPICPGYRWMCLRR. The helical transmembrane segment at 243–263 threads the bilayer; the sequence is FIIFLCILLLCLIFLLVLLDY. The Virion surface segment spans residues 264-337; sequence QGMLPVCPLI…WASVRFSWLS (74 aa). Asn-309 carries N-linked (GlcNAc...) asparagine; by host glycosylation. A helical membrane pass occupies residues 338–358; it reads LLVPFVQWFVGLSPTVWLSVI. Residues 359 to 364 lie on the Intravirion side of the membrane; that stretch reads WMMWFW. The chain crosses the membrane as a helical span at residues 365 to 387; that stretch reads GPSLYNILSPFMPLLPIFFCLWV. At 388–389 the chain is on the virion surface side; sequence YI.

Belongs to the orthohepadnavirus major surface antigen family. As to quaternary structure, interacts (via its myristoylated pre-S1 region) with the host SLC10A1/NTCP; this interaction is essential for viral entry. In its internal form (Li-HBsAg), interacts with the capsid protein and with the isoform S. Interacts with host chaperone CANX. In terms of assembly, associates with host chaperone CANX through its pre-S2 N glycan; this association may be essential for isoform M proper secretion. As to quaternary structure, interacts with isoform L. Interacts with the antigens of satellite virus HDV (HDVAgs); this interaction is required for encapsidation of HDV genomic RNA. Isoform M is N-terminally acetylated by host at a ratio of 90%, and N-glycosylated by host at the pre-S2 region. Post-translationally, myristoylated; this modification is essential for its interaction with the host protein SLC10A1/NTCP.

Its subcellular location is the virion membrane. The large envelope protein exists in two topological conformations, one which is termed 'external' or Le-HBsAg and the other 'internal' or Li-HBsAg. In its external conformation the protein attaches the virus to cell receptors and thereby initiating infection. This interaction determines the species specificity and liver tropism. This attachment induces virion internalization predominantly through caveolin-mediated endocytosis. The large envelope protein also assures fusion between virion membrane and endosomal membrane. In its internal conformation the protein plays a role in virion morphogenesis and mediates the contact with the nucleocapsid like a matrix protein. Functionally, the middle envelope protein plays an important role in the budding of the virion. It is involved in the induction of budding in a nucleocapsid independent way. In this process the majority of envelope proteins bud to form subviral lipoprotein particles of 22 nm of diameter that do not contain a nucleocapsid. This Hepatitis B virus genotype B2 (isolate Indonesia/pIDW420/1988) (HBV-B) protein is Large envelope protein.